The primary structure comprises 892 residues: Integrator complex subunit 6 (892 aa).

Residues 3-227 form the VWFA domain; it reads ILLFLIDTSA…QCLESLVQKV (225 aa). The Inhibitory loop signature appears at 630–637; that stretch reads MMIDEADE. 3 disordered regions span residues 665 to 692, 711 to 754, and 771 to 793; these read MSPL…GTQG, VGGT…AAPD, and PDHT…EVNE.

The protein belongs to the Integrator subunit 6 family. As to quaternary structure, component of the Integrator complex, composed of core subunits INTS1, INTS2, INTS3, INTS4, INTS5, INTS6, INTS7, INTS8, INTS9/RC74, INTS10, INTS11/CPSF3L, INTS12, INTS13, INTS14 and INTS15. The core complex associates with protein phosphatase 2A subunits PPP2CA and PPP2R1A, to form the Integrator-PP2A (INTAC) complex.

Its subcellular location is the nucleus. The protein resides in the chromosome. Functionally, component of the integrator complex, a multiprotein complex that terminates RNA polymerase II (Pol II) transcription in the promoter-proximal region of genes. The integrator complex provides a quality checkpoint during transcription elongation by driving premature transcription termination of transcripts that are unfavorably configured for transcriptional elongation: the complex terminates transcription by (1) catalyzing dephosphorylation of the C-terminal domain (CTD) of Pol II subunit POLR2A/RPB1 and SUPT5H/SPT5, (2) degrading the exiting nascent RNA transcript via endonuclease activity and (3) promoting the release of Pol II from bound DNA. The integrator complex is also involved in terminating the synthesis of non-coding Pol II transcripts, such as enhancer RNAs (eRNAs), small nuclear RNAs (snRNAs), telomerase RNAs and long non-coding RNAs (lncRNAs). Within the integrator complex, INTS6 acts as a molecular adapter that promotes assembly of protein phosphatase 2A (PP2A) subunits to the integrator core complex, promoting recruitment of PP2A to transcription pause-release checkpoint. The polypeptide is Integrator complex subunit 6 (ints6l) (Danio rerio (Zebrafish)).